Consider the following 102-residue polypeptide: Protein YcgL (102 aa).

The region spanning 14 to 98 is the YcgL domain; sequence MFCVIYRSSK…PPEDLLKQHL (85 aa).

The polypeptide is Protein YcgL (Salmonella agona (strain SL483)).